Reading from the N-terminus, the 247-residue chain is MKILFDVGNTHTTVALTENGKFFKIKRISTYSIQTEDELYAYLKVFFGETYDEVIVSSVVPNINHVFEFFSKKYAGKSAIFLNAQSYKGITWNVKIPSEIGADRVANIIAAERDYGKDAIVVDFGTAITIDILKEKSYEGGIIIPGFSMMINALFKGTAKLPKVELKPFNGFIGKDTESNIRIGIINTVVEGIGSVINKIKNENFRDVPVIFTGGQSKIIMDYKRDVIYDLELGLRGIYYFYESVVS.

Position 6-13 (6-13 (DVGNTHTT)) interacts with ATP. 101–104 (GADR) is a substrate binding site. D103 (proton acceptor) is an active-site residue. D123 provides a ligand contact to K(+). T126 is a binding site for ATP. T177 contacts substrate.

It belongs to the type III pantothenate kinase family. In terms of assembly, homodimer. NH4(+) serves as cofactor. The cofactor is K(+).

It localises to the cytoplasm. The enzyme catalyses (R)-pantothenate + ATP = (R)-4'-phosphopantothenate + ADP + H(+). Its pathway is cofactor biosynthesis; coenzyme A biosynthesis; CoA from (R)-pantothenate: step 1/5. Its function is as follows. Catalyzes the phosphorylation of pantothenate (Pan), the first step in CoA biosynthesis. In Thermosipho melanesiensis (strain DSM 12029 / CIP 104789 / BI429), this protein is Type III pantothenate kinase.